The chain runs to 316 residues: Transaldolase (316 aa).

Lysine 132 serves as the catalytic Schiff-base intermediate with substrate.

This sequence belongs to the transaldolase family. Type 1 subfamily. As to quaternary structure, homodimer.

The protein localises to the cytoplasm. The enzyme catalyses D-sedoheptulose 7-phosphate + D-glyceraldehyde 3-phosphate = D-erythrose 4-phosphate + beta-D-fructose 6-phosphate. Its pathway is carbohydrate degradation; pentose phosphate pathway; D-glyceraldehyde 3-phosphate and beta-D-fructose 6-phosphate from D-ribose 5-phosphate and D-xylulose 5-phosphate (non-oxidative stage): step 2/3. Its function is as follows. Transaldolase is important for the balance of metabolites in the pentose-phosphate pathway. The protein is Transaldolase of Vibrio cholerae serotype O1 (strain ATCC 39541 / Classical Ogawa 395 / O395).